A 1071-amino-acid polypeptide reads, in one-letter code: DNA-directed RNA polymerase subunit beta (1071 aa).

The protein belongs to the RNA polymerase beta chain family. In plastids the minimal PEP RNA polymerase catalytic core is composed of four subunits: alpha, beta, beta', and beta''. When a (nuclear-encoded) sigma factor is associated with the core the holoenzyme is formed, which can initiate transcription.

It localises to the plastid. The protein resides in the chloroplast. It catalyses the reaction RNA(n) + a ribonucleoside 5'-triphosphate = RNA(n+1) + diphosphate. Its function is as follows. DNA-dependent RNA polymerase catalyzes the transcription of DNA into RNA using the four ribonucleoside triphosphates as substrates. The sequence is that of DNA-directed RNA polymerase subunit beta from Anthoceros angustus (Hornwort).